A 356-amino-acid chain; its full sequence is Aminodeoxyfutalosine deaminase (356 aa).

Positions 18 and 20 each coordinate Zn(2+). Arg-73, Glu-140, and Gly-172 together coordinate substrate. Residue His-199 coordinates Zn(2+). Glu-202 acts as the Proton donor in catalysis. Asp-287 is a binding site for Zn(2+).

Belongs to the metallo-dependent hydrolases superfamily. Adenosine and AMP deaminases family. Zn(2+) is required as a cofactor.

The catalysed reaction is 6-amino-6-deoxyfutalosine + H2O + H(+) = futalosine + NH4(+). Its pathway is quinol/quinone metabolism; menaquinone biosynthesis. Its function is as follows. Catalyzes the deamination of aminodeoxyfutalosine (AFL) into futalosine (FL), a step in the biosynthesis of menaquinone (MK, vitamin K2). Is very poorly efficient on 1-(6-amino-9H-purin-9-yl)-1-deoxy-N-ethyl-beta-D-ribofuranuronamide (NECA), adenosine, 5'-methylthioadenosine, 5'-deoxyadenosine, 2'-deoxyadenosine, and AMP as substrate. This chain is Aminodeoxyfutalosine deaminase, found in Acidothermus cellulolyticus (strain ATCC 43068 / DSM 8971 / 11B).